A 251-amino-acid polypeptide reads, in one-letter code: HTH-type transcriptional regulator UlaR (251 aa).

The 56-residue stretch at 3 to 58 (EAQRHQILLDMLAQLGFVTVENVIERLGISPATARRDINKLDESGKLKKVRNGAEA) folds into the HTH deoR-type domain. Positions 20 to 39 (VTVENVIERLGISPATARRD) form a DNA-binding region, H-T-H motif.

It is found in the cytoplasm. In terms of biological role, represses ulaG and the ulaABCDEF operon. In Salmonella arizonae (strain ATCC BAA-731 / CDC346-86 / RSK2980), this protein is HTH-type transcriptional regulator UlaR.